The following is a 494-amino-acid chain: Serine carboxypeptidase-like 21 (494 aa).

An N-terminal signal peptide occupies residues 1-23 (MGRLVEAIIASILLSLCFTITKS). N-linked (GlcNAc...) asparagine glycans are attached at residues N37 and N69. Intrachain disulfides connect C85-C383, C247-C263, and C286-C350. S179 is an active-site residue. N-linked (GlcNAc...) asparagine glycosylation is found at N198 and N248. N402 carries N-linked (GlcNAc...) asparagine glycosylation. D418 is an active-site residue. An N-linked (GlcNAc...) asparagine glycan is attached at N460. H471 is a catalytic residue.

The protein belongs to the peptidase S10 family. Expressed in flowers and siliques.

It is found in the secreted. Its function is as follows. Probable carboxypeptidase. This Arabidopsis thaliana (Mouse-ear cress) protein is Serine carboxypeptidase-like 21 (SCPL21).